The sequence spans 549 residues: Chaperonin GroEL (549 aa).

Residues 30–33, lysine 51, 87–91, glycine 415, and aspartate 497 each bind ATP; these read TLGP and DGTTT.

Belongs to the chaperonin (HSP60) family. Forms a cylinder of 14 subunits composed of two heptameric rings stacked back-to-back. Interacts with the co-chaperonin GroES.

The protein localises to the cytoplasm. It catalyses the reaction ATP + H2O + a folded polypeptide = ADP + phosphate + an unfolded polypeptide.. Together with its co-chaperonin GroES, plays an essential role in assisting protein folding. The GroEL-GroES system forms a nano-cage that allows encapsulation of the non-native substrate proteins and provides a physical environment optimized to promote and accelerate protein folding. This chain is Chaperonin GroEL, found in Pectobacterium atrosepticum (strain SCRI 1043 / ATCC BAA-672) (Erwinia carotovora subsp. atroseptica).